Here is a 150-residue protein sequence, read N- to C-terminus: Large ribosomal subunit protein bL9 (150 aa).

It belongs to the bacterial ribosomal protein bL9 family.

In terms of biological role, binds to the 23S rRNA. This is Large ribosomal subunit protein bL9 from Shewanella sediminis (strain HAW-EB3).